Here is a 317-residue protein sequence, read N- to C-terminus: DNA repair nuclease/redox regulator APEX1 (317 aa).

The disordered stretch occupies residues 1 to 58 (MPKRGKKAAADDGEEPKSEPETKKSKGAAKKTEKEAAGEGPVLYEDPPDQKTSPSGKS). The tract at residues 2-32 (PKRGKKAAADDGEEPKSEPETKKSKGAAKKT) is necessary for interaction with YBX1, binding to RNA, association together with NPM1 to rRNA, endoribonuclease activity on abasic RNA and localization in the nucleoli. Lys-6 and Lys-7 each carry N6-acetyllysine; by EP300. Residues 8–12 (AAADD) carry the Nuclear localization signal (NLS) motif. Basic and acidic residues predominate over residues 15-37 (EPKSEPETKKSKGAAKKTEKEAA). Phosphoserine is present on Ser-18. The tract at residues 22–32 (TKKSKGAAKKT) is necessary for interaction with NPM1 and for efficient rRNA binding. Lys-26, Lys-30, Lys-31, and Lys-34 each carry N6-acetyllysine. Phosphoserine is present on Ser-53. The Nuclear export signal (NES) motif lies at 63 to 79 (ICSWNVDGLRAWIKKKG). An S-nitrosocysteine; alternate modification is found at Cys-64. An intrachain disulfide couples Cys-64 to Cys-92. Asp-69 is a binding site for Mg(2+). Cys-92 bears the S-nitrosocysteine; alternate mark. Glu-95 provides a ligand contact to Mg(2+). Tyr-170 is an active-site residue. The residue at position 196 (Lys-196) is an N6-acetyllysine. 2 residues coordinate Mg(2+): Asp-209 and Asn-211. The Proton donor/acceptor role is filled by Asp-209. Thr-232 carries the post-translational modification Phosphothreonine; by CDK5. A mitochondrial targeting sequence (MTS) region spans residues 288–317 (HSLLPALCDSKIRSKALGSDHCPITLYLAL). Asp-307 serves as a coordination point for Mg(2+). Cys-309 carries the S-nitrosocysteine modification.

This sequence belongs to the DNA repair enzymes AP/ExoA family. As to quaternary structure, monomer. Homodimer; disulfide-linked. Component of the SET complex, composed of at least APEX1, SET, ANP32A, HMGB2, NME1 and TREX1. Associates with the dimer XRCC5/XRCC6 in a DNA-dependent manner. Interacts with SIRT1; the interaction is increased in the context of genotoxic stress. Interacts with HDAC1, HDAC2 and HDAC3; the interactions are not dependent on the APEX1 acetylation status. Interacts with XRCC1; the interaction is induced by SIRT1 and increased with the APEX1 acetylated form. Interacts with NPM1 (via N-terminal domain); the interaction is RNA-dependent and decreases in hydrogen peroxide-damaged cells. Interacts (via N-terminus) with YBX1 (via C-terminus); the interaction is increased in presence of APEX1 acetylated at Lys-6 and Lys-7. Interacts with HNRNPL; the interaction is DNA-dependent. Interacts (via N-terminus) with KPNA1 and KPNA2. Interacts with TXN; the interaction stimulates the FOS/JUN AP-1 complex DNA-binding activity in a redox-dependent manner. Interacts with GZMA, KRT8, MDM2, POLB, PRDX6, PRPF19, RPLP0, TOMM20 and WDR77. Binds to CDK5. Requires Mg(2+) as cofactor. It depends on Mn(2+) as a cofactor. In terms of processing, phosphorylated. Phosphorylation by kinase PKC or casein kinase CK2 results in enhanced redox activity that stimulates binding of the FOS/JUN AP-1 complex to its cognate binding site. AP-endodeoxyribonuclease activity is not affected by CK2-mediated phosphorylation. Phosphorylation of Thr-232 by CDK5 in response to MPP(+)/MPTP (1-methyl-4-phenylpyridinium) reduces AP-endodeoxyribonuclease activity resulting in accumulation of DNA damage and contributing to neuronal death. Acetylated on Lys-6 and Lys-7. Acetylation is increased by the transcriptional coactivator EP300 acetyltransferase, genotoxic agents like H(2)O(2) and methyl methanesulfonate (MMS). Acetylation increases its binding affinity to the negative calcium response element (nCaRE) DNA promoter. The acetylated form induces a stronger binding of YBX1 to the Y-box sequence in the MDR1 promoter than the unacetylated form. Deacetylated on lysines. Lys-6 and Lys-7 are deacetylated by SIRT1. Post-translationally, cleaved at Lys-30 by granzyme A to create the mitochondrial form; leading in reduction of binding to DNA, AP endodeoxyribonuclease activity, redox activation of transcription factors and to enhanced cell death. Cleaved by granzyme K; leading to intracellular ROS accumulation and enhanced cell death after oxidative stress. In terms of processing, cys-64 and Cys-92 are nitrosylated in response to nitric oxide (NO) and lead to the exposure of the nuclear export signal (NES). Ubiquitinated by MDM2; leading to translocation to the cytoplasm and proteasomal degradation. As to expression, expressed in both resting and stimulated B cells stimulated to switch (at protein level).

It localises to the nucleus. The protein resides in the nucleolus. The protein localises to the nucleus speckle. It is found in the endoplasmic reticulum. Its subcellular location is the cytoplasm. It localises to the mitochondrion. It catalyses the reaction a deoxyribonucleotide-2'-deoxyribose-5'-monophosphate-DNA + H2O = a 5'-end 2'-deoxyribose-5'-monophosphate-DNA + a 3'-end 2'-deoxyribonucleotide-DNA + H(+). The enzyme catalyses Exonucleolytic cleavage in the 3'- to 5'-direction to yield nucleoside 5'-phosphates.. The catalysed reaction is a 3'-end 2'-deoxyribonucleotide-3'-phosphoglycolate-DNA + H2O = 2-phosphoglycolate + a 3'-end 2'-deoxyribonucleotide-DNA + H(+). It carries out the reaction a 3'-end 2'-deoxyribonucleotide-8-oxoguanine-DNA + H2O = 8-oxo-dGMP + a 3'-end 2'-deoxyribonucleotide-DNA + H(+). NPM1 stimulates endodeoxyribonuclease activity on double-stranded DNA with AP sites, but inhibits endoribonuclease activity on single-stranded RNA containing AP sites. Its function is as follows. Multifunctional protein that plays a central role in the cellular response to oxidative stress. The two major activities of APEX1 are DNA repair and redox regulation of transcriptional factors. Functions as an apurinic/apyrimidinic (AP) endodeoxyribonuclease in the base excision repair (BER) pathway of DNA lesions induced by oxidative and alkylating agents. Initiates repair of AP sites in DNA by catalyzing hydrolytic incision of the phosphodiester backbone immediately adjacent to the damage, generating a single-strand break with 5'-deoxyribose phosphate and 3'-hydroxyl ends. Also incises at AP sites in the DNA strand of DNA/RNA hybrids, single-stranded DNA regions of R-loop structures, and single-stranded RNA molecules. Operates at switch sites of immunoglobulin (Ig) constant regions where it mediates Ig isotype class switch recombination. Processes AP sites induced by successive action of AICDA and UNG. Generates staggered nicks in opposite DNA strands resulting in the formation of double-strand DNA breaks that are finally resolved via non-homologous end joining repair pathway. Has 3'-5' exodeoxyribonuclease activity on mismatched deoxyribonucleotides at the 3' termini of nicked or gapped DNA molecules during short-patch BER. Possesses DNA 3' phosphodiesterase activity capable of removing lesions (such as phosphoglycolate and 8-oxoguanine) blocking the 3' side of DNA strand breaks. Also acts as an endoribonuclease involved in the control of single-stranded RNA metabolism. Plays a role in regulating MYC mRNA turnover by preferentially cleaving in between UA and CA dinucleotides of the MYC coding region determinant (CRD). In association with NMD1, plays a role in the rRNA quality control process during cell cycle progression. Acts as a loading factor for POLB onto non-incised AP sites in DNA and stimulates the 5'-terminal deoxyribose 5'-phosphate (dRp) excision activity of POLB. Exerts reversible nuclear redox activity to regulate DNA binding affinity and transcriptional activity of transcriptional factors by controlling the redox status of their DNA-binding domain, such as the FOS/JUN AP-1 complex after exposure to IR. Involved in calcium-dependent down-regulation of parathyroid hormone (PTH) expression by binding to negative calcium response elements (nCaREs). Together with HNRNPL or the dimer XRCC5/XRCC6, associates with nCaRE, acting as an activator of transcriptional repression. May also play a role in the epigenetic regulation of gene expression by participating in DNA demethylation. Stimulates the YBX1-mediated MDR1 promoter activity, when acetylated at Lys-6 and Lys-7, leading to drug resistance. Plays a role in protection from granzyme-mediated cellular repair leading to cell death. Binds DNA and RNA. Associates, together with YBX1, on the MDR1 promoter. Together with NPM1, associates with rRNA. In Mus musculus (Mouse), this protein is DNA repair nuclease/redox regulator APEX1 (Apex1).